A 123-amino-acid polypeptide reads, in one-letter code: Small ribosomal subunit protein uS12 (123 aa).

The residue at position 89 (Asp89) is a 3-methylthioaspartic acid.

It belongs to the universal ribosomal protein uS12 family. In terms of assembly, part of the 30S ribosomal subunit. Contacts proteins S8 and S17. May interact with IF1 in the 30S initiation complex.

Its function is as follows. With S4 and S5 plays an important role in translational accuracy. In terms of biological role, interacts with and stabilizes bases of the 16S rRNA that are involved in tRNA selection in the A site and with the mRNA backbone. Located at the interface of the 30S and 50S subunits, it traverses the body of the 30S subunit contacting proteins on the other side and probably holding the rRNA structure together. The combined cluster of proteins S8, S12 and S17 appears to hold together the shoulder and platform of the 30S subunit. The chain is Small ribosomal subunit protein uS12 from Bartonella bacilliformis (strain ATCC 35685 / KC583 / Herrer 020/F12,63).